Consider the following 113-residue polypeptide: TYRO protein tyrosine kinase-binding protein (113 aa).

Positions 1 to 27 (MGGLEPCSRLLLLPLLLAVGGLRPVQA) are cleaved as a signal peptide. Over 28-40 (QAQSDCSCSTVSP) the chain is Extracellular. The chain crosses the membrane as a helical span at residues 41-61 (GVLAGIVLGDLVLTVLIALAV). A Ca(2+)-binding site is contributed by D50. Topologically, residues 62–113 (YFLGRLVPRGRGAAEAATRKQRITETESPYQELQGQRSDVYSDLNTQRPYYK) are cytoplasmic. Residues 75–113 (AEAATRKQRITETESPYQELQGQRSDVYSDLNTQRPYYK) are disordered. The 29-residue stretch at 80-108 (RKQRITETESPYQELQGQRSDVYSDLNTQ) folds into the ITAM domain. Residues 87–113 (TESPYQELQGQRSDVYSDLNTQRPYYK) are compositionally biased toward polar residues. A phosphotyrosine mark is found at Y91 and Y102.

Belongs to the TYROBP family. In terms of assembly, homodimer; disulfide-linked. Homotrimer; disulfide-linked. Homotetramer; disulfide-linked. Homotrimers and homotetramers form when low levels of partner receptors are available and is competitive with assembly with interacting receptors. They may represent alternative oligomerization states or may be intermediates in the receptor assembly process. Binding of a metal cation aids in homooligomerization through coordination of the metal ion by the subunits of the oligomer. Interacts with TREM1. Interacts with TREM2. Interacts with CLECSF5. Interacts with CD300LB and CD300C2. Interacts with CD300E. Interacts (via ITAM domain) with SYK (via SH2 domains); activates SYK mediating neutrophils and macrophages integrin-mediated activation. Interacts with KLRC2. Interacts with CD300H. Interacts with KLRD1. Following ligand binding by associated receptors, tyrosine phosphorylated in the ITAM domain which leads to activation of additional tyrosine kinases and subsequent cell activation.

The protein localises to the cell membrane. Functionally, adapter protein which non-covalently associates with activating receptors found on the surface of a variety of immune cells to mediate signaling and cell activation following ligand binding by the receptors. TYROBP is tyrosine-phosphorylated in the ITAM domain following ligand binding by the associated receptors which leads to activation of additional tyrosine kinases and subsequent cell activation. Also has an inhibitory role in some cells. Non-covalently associates with activating receptors of the CD300 family to mediate cell activation. Also mediates cell activation through association with activating receptors of the CD200R family. Required for neutrophil activation mediated by integrin. Required for the activation of myeloid cells mediated by the CLEC5A/MDL1 receptor. Associates with natural killer (NK) cell receptors such as the KLRD1/KLRC2 heterodimer to mediate NK cell activation. Associates with TREM1 to mediate activation of neutrophils and monocytes. Associates with TREM2 on monocyte-derived dendritic cells to mediate up-regulation of chemokine receptor CCR7 and dendritic cell maturation and survival. Association with TREM2 mediates cytokine-induced formation of multinucleated giant cells which are formed by the fusion of macrophages. Stabilizes the TREM2 C-terminal fragment (TREM2-CTF) produced by TREM2 ectodomain shedding which suppresses the release of pro-inflammatory cytokines. In microglia, required with TREM2 for phagocytosis of apoptotic neurons. Required with ITGAM/CD11B in microglia to control production of microglial superoxide ions which promote the neuronal apoptosis that occurs during brain development. Promotes pro-inflammatory responses in microglia following nerve injury which accelerates degeneration of injured neurons. Positively regulates the expression of the IRAK3/IRAK-M kinase and IL10 production by liver dendritic cells and inhibits their T cell allosimulatory ability. Negatively regulates B cell proliferation. Required for CSF1-mediated osteoclast cytoskeletal organization. Positively regulates multinucleation during osteoclast development. In Macaca mulatta (Rhesus macaque), this protein is TYRO protein tyrosine kinase-binding protein.